Consider the following 182-residue polypeptide: Adenylate kinase (182 aa).

12–17 provides a ligand contact to ATP; sequence GAGKGT. Positions 32–61 are NMP; sequence STGDLLRAEVGAKTPLGQEAAAVMNRGELV. Residues Thr33, Arg38, 59–61, 85–88, and Gln92 each bind AMP; these read ELV and GFPR. The tract at residues 126 to 132 is LID; that stretch reads SRGRSDD. An ATP-binding site is contributed by Arg127. Positions 129 and 140 each coordinate AMP. Gly168 lines the ATP pocket.

Belongs to the adenylate kinase family. Monomer.

The protein localises to the cytoplasm. The catalysed reaction is AMP + ATP = 2 ADP. It functions in the pathway purine metabolism; AMP biosynthesis via salvage pathway; AMP from ADP: step 1/1. Functionally, catalyzes the reversible transfer of the terminal phosphate group between ATP and AMP. Plays an important role in cellular energy homeostasis and in adenine nucleotide metabolism. The chain is Adenylate kinase from Prochlorococcus marinus (strain MIT 9303).